Here is a 452-residue protein sequence, read N- to C-terminus: MSFRVKGWSDQFSESFYERATTLLTAALNKGTKHSMIADHITVKELDLGPQPPQLEILEVGDLAPDRFQGLFNLHYSGDASLVLQTKIRANPLSVQKSNVPSFSSRNTMLASRAPLTVPMFLRLSDLKLNGIVVLVFSKQKGITVVFRNDPLESVRVSSSFDSIPAIARFLQREIEVQLVSLFQEELPSIIYKMSRIWFAKSDSNLSFQKIPFTSPNQSHTSLANYNPDLLDGPPDYHESTKVDTHLPIKMGPLDVQTHPNIRSIASLALSRKALLPISSPSIPMSIYRSTPPDTIIQQLTTQSDDISAVSSPATQYSASDYLGSNDTTARPSIFGRSHGTSQFRRRERVKKRHVIKIHEASNKSASSSETFVGSKNVDLTESAFDSIPDTPTKIITNINKLKRNYTITNNWLENLQQKIPSEVDNGKVSGLQYSAFKLLMLQRLMAAKGSF.

Positions 1-196 (MSFRVKGWSD…LPSIIYKMSR (196 aa)) constitute an SMP-LTD domain.

Belongs to the MDM34 family. As to quaternary structure, component of the ER-mitochondria encounter structure (ERMES) or MDM complex, composed of mmm1, mdm10, mdm12 and mdm34.

The protein localises to the mitochondrion outer membrane. Component of the ERMES/MDM complex, which serves as a molecular tether to connect the endoplasmic reticulum (ER) and mitochondria. Components of this complex are involved in the control of mitochondrial shape and protein biogenesis, and function in nonvesicular lipid trafficking between the ER and mitochondria. Mdm34 is required for the interaction of the ER-resident membrane protein mmm1 and the outer mitochondrial membrane-resident beta-barrel protein mdm10. The protein is Mitochondrial distribution and morphology protein 34 of Schizosaccharomyces pombe (strain 972 / ATCC 24843) (Fission yeast).